The primary structure comprises 412 residues: L-cysteine:1D-myo-inositol 2-amino-2-deoxy-alpha-D-glucopyranoside ligase (412 aa).

Cys45 contacts Zn(2+). L-cysteinyl-5'-AMP-binding positions include 45-48 (CGIT), Thr60, and 83-85 (NIT). Positions 47–57 (ITPYDAAHLGH) match the 'HIGH' region motif. The short motif at 185–190 (ERGGDP) is the 'ERGGDP' region element. Trp225 serves as a coordination point for L-cysteinyl-5'-AMP. Residue Cys229 participates in Zn(2+) binding. An L-cysteinyl-5'-AMP-binding site is contributed by 247-249 (GDD). A Zn(2+)-binding site is contributed by His254. Val281 is a binding site for L-cysteinyl-5'-AMP. Residues 287–291 (KMSKS) carry the 'KMSKS' region motif.

This sequence belongs to the class-I aminoacyl-tRNA synthetase family. MshC subfamily. In terms of assembly, monomer. Zn(2+) is required as a cofactor.

The enzyme catalyses 1D-myo-inositol 2-amino-2-deoxy-alpha-D-glucopyranoside + L-cysteine + ATP = 1D-myo-inositol 2-(L-cysteinylamino)-2-deoxy-alpha-D-glucopyranoside + AMP + diphosphate + H(+). Catalyzes the ATP-dependent condensation of GlcN-Ins and L-cysteine to form L-Cys-GlcN-Ins. The sequence is that of L-cysteine:1D-myo-inositol 2-amino-2-deoxy-alpha-D-glucopyranoside ligase from Thermobifida fusca (strain YX).